Reading from the N-terminus, the 235-residue chain is Elongation factor Tu, chloroplastic (235 aa).

The region spanning 1–125 is the tr-type G domain; sequence KNMITGAAQM…AVDSYIPTPE (125 aa). 47–50 is a GTP binding site; sequence NKED.

This sequence belongs to the TRAFAC class translation factor GTPase superfamily. Classic translation factor GTPase family. EF-Tu/EF-1A subfamily.

It is found in the plastid. The protein resides in the chloroplast. The enzyme catalyses GTP + H2O = GDP + phosphate + H(+). GTP hydrolase that promotes the GTP-dependent binding of aminoacyl-tRNA to the A-site of ribosomes during protein biosynthesis. This is Elongation factor Tu, chloroplastic (tufA) from Mantoniella squamata (Unicellular alga).